The following is a 104-amino-acid chain: UPF0145 protein DET1617 (104 aa).

This sequence belongs to the UPF0145 family.

This Dehalococcoides mccartyi (strain ATCC BAA-2266 / KCTC 15142 / 195) (Dehalococcoides ethenogenes (strain 195)) protein is UPF0145 protein DET1617.